The following is a 418-amino-acid chain: Glutamyl-tRNA(Gln) amidotransferase subunit D (418 aa).

Residues 74 to 405 (KNISILSTGG…EDAKELMSKD (332 aa)) form the Asparaginase/glutaminase domain. Residues T84, T160, D161, and K237 contribute to the active site.

It belongs to the asparaginase 1 family. GatD subfamily. Heterodimer of GatD and GatE.

It carries out the reaction L-glutamyl-tRNA(Gln) + L-glutamine + ATP + H2O = L-glutaminyl-tRNA(Gln) + L-glutamate + ADP + phosphate + H(+). Its function is as follows. Allows the formation of correctly charged Gln-tRNA(Gln) through the transamidation of misacylated Glu-tRNA(Gln) in organisms which lack glutaminyl-tRNA synthetase. The reaction takes place in the presence of glutamine and ATP through an activated gamma-phospho-Glu-tRNA(Gln). The GatDE system is specific for glutamate and does not act on aspartate. This is Glutamyl-tRNA(Gln) amidotransferase subunit D from Methanococcus maripaludis (strain C7 / ATCC BAA-1331).